Here is a 436-residue protein sequence, read N- to C-terminus: Ribulose bisphosphate carboxylase large chain (436 aa).

The substrate site is built by asparagine 104 and threonine 154. The Proton acceptor role is filled by lysine 156. Lysine 158 lines the substrate pocket. Mg(2+) is bound by residues lysine 182, aspartate 184, and glutamate 185. Lysine 182 carries the N6-carboxylysine modification. The Proton acceptor role is filled by histidine 275. Residues arginine 276, histidine 308, and serine 360 each coordinate substrate.

This sequence belongs to the RuBisCO large chain family. Type I subfamily. In terms of assembly, heterohexadecamer of 8 large chains and 8 small chains; disulfide-linked. The disulfide link is formed within the large subunit homodimers. It depends on Mg(2+) as a cofactor. The disulfide bond which can form in the large chain dimeric partners within the hexadecamer appears to be associated with oxidative stress and protein turnover.

It localises to the plastid. It is found in the chloroplast. It catalyses the reaction 2 (2R)-3-phosphoglycerate + 2 H(+) = D-ribulose 1,5-bisphosphate + CO2 + H2O. The enzyme catalyses D-ribulose 1,5-bisphosphate + O2 = 2-phosphoglycolate + (2R)-3-phosphoglycerate + 2 H(+). Its function is as follows. RuBisCO catalyzes two reactions: the carboxylation of D-ribulose 1,5-bisphosphate, the primary event in carbon dioxide fixation, as well as the oxidative fragmentation of the pentose substrate in the photorespiration process. Both reactions occur simultaneously and in competition at the same active site. In Euglena anabaena (Euglenaria anabaena), this protein is Ribulose bisphosphate carboxylase large chain.